Consider the following 341-residue polypeptide: Anthranilate phosphoribosyltransferase (341 aa).

Residues Gly80, 83 to 84 (GD), Thr88, 90 to 93 (NIST), 108 to 116 (KHGNRAVSS), and Ser120 each bind 5-phospho-alpha-D-ribose 1-diphosphate. Gly80 is an anthranilate binding site. Residue Ser92 coordinates Mg(2+). Asn111 is an anthranilate binding site. Arg166 is a binding site for anthranilate. Positions 225 and 226 each coordinate Mg(2+).

It belongs to the anthranilate phosphoribosyltransferase family. In terms of assembly, homodimer. The cofactor is Mg(2+).

It carries out the reaction N-(5-phospho-beta-D-ribosyl)anthranilate + diphosphate = 5-phospho-alpha-D-ribose 1-diphosphate + anthranilate. It functions in the pathway amino-acid biosynthesis; L-tryptophan biosynthesis; L-tryptophan from chorismate: step 2/5. Functionally, catalyzes the transfer of the phosphoribosyl group of 5-phosphorylribose-1-pyrophosphate (PRPP) to anthranilate to yield N-(5'-phosphoribosyl)-anthranilate (PRA). This Brevibacillus brevis (strain 47 / JCM 6285 / NBRC 100599) protein is Anthranilate phosphoribosyltransferase.